The sequence spans 532 residues: UDP-glucuronosyltransferase 1A4 (532 aa).

The first 27 residues, 1 to 27 (MVLGVWITLWRLVRLLLLLCVLPWAEG), serve as a signal peptide directing secretion. 2 N-linked (GlcNAc...) asparagine glycosylation sites follow: N141 and N295. A helical transmembrane segment spans residues 490–506 (VIGFLLAIVLTVAFVTF).

Belongs to the UDP-glycosyltransferase family. As to quaternary structure, homodimers. Homooligomer. Interacts with UGT1A1, UGT1A3, UGT1A6, UGT1A7, UGT1A8, UGT1A9 and UGT1A10 to form heterodimers.

Its subcellular location is the endoplasmic reticulum membrane. The catalysed reaction is glucuronate acceptor + UDP-alpha-D-glucuronate = acceptor beta-D-glucuronoside + UDP + H(+). The enzyme catalyses calcidiol + UDP-alpha-D-glucuronate = calcidiol 25-O-(beta-D-glucuronide) + UDP + H(+). It carries out the reaction calcidiol + UDP-alpha-D-glucuronate = calcidiol 3-O-(beta-D-glucuronide) + UDP + H(+). It catalyses the reaction calcitriol + UDP-alpha-D-glucuronate = calcitriol 25-O-(beta-D-glucuronide) + UDP + H(+). The catalysed reaction is (5Z,8Z,11Z,14Z)-eicosatetraenoate + UDP-alpha-D-glucuronate = O-[(5Z),(8Z),(11Z),(14Z)-eicosatetraenoyl]-beta-D-glucuronate + UDP. The enzyme catalyses 15-hydroxy-(5Z,8Z,11Z,13E)-eicosatetraenoate + UDP-alpha-D-glucuronate = 15-O-(beta-D-glucuronosyl)-(5Z,8Z,11Z,14Z)-eicosatetraenoate + UDP + H(+). It carries out the reaction 20-hydroxy-(5Z,8Z,11Z,14Z)-eicosatetraenoate + UDP-alpha-D-glucuronate = 20-O-(beta-D-glucuronosyl)-(5Z,8Z,11Z,14Z)-eicosatetraenoate + UDP + H(+). UDP-glucuronosyltransferase (UGT) that catalyzes phase II biotransformation reactions in which lipophilic substrates are conjugated with glucuronic acid to increase the metabolite's water solubility, thereby facilitating excretion into either the urine or bile. Essential for the elimination and detoxification of drugs, xenobiotics and endogenous compounds. Involved in the glucuronidation of calcidiol, which is the major circulating form of vitamin D3 essential for the regulation of calcium and phosphate homeostasis. Also glucuronidates the biologically active form of vitamin D3, calcitriol, probably leading to its biliary transport and intestinal reabsorption. Involved in the glucuronidation of arachidonic acid (AA) and AA-derived eicosanoids including 15-HETE, 20-HETE and PGB1. This chain is UDP-glucuronosyltransferase 1A4 (Ugt1a4), found in Oryctolagus cuniculus (Rabbit).